A 150-amino-acid polypeptide reads, in one-letter code: Phosphopantetheine adenylyltransferase (150 aa).

Position 10 (Ser10) interacts with substrate. ATP contacts are provided by residues 10 to 11 and His18; that span reads SF. The substrate site is built by Lys42, Thr74, and Arg88. Residues 89–91, Glu99, and 124–130 each bind ATP; these read GLR and LAYISSS.

The protein belongs to the bacterial CoaD family. In terms of assembly, homohexamer. Mg(2+) is required as a cofactor.

Its subcellular location is the cytoplasm. The enzyme catalyses (R)-4'-phosphopantetheine + ATP + H(+) = 3'-dephospho-CoA + diphosphate. It functions in the pathway cofactor biosynthesis; coenzyme A biosynthesis; CoA from (R)-pantothenate: step 4/5. Reversibly transfers an adenylyl group from ATP to 4'-phosphopantetheine, yielding dephospho-CoA (dPCoA) and pyrophosphate. This Cytophaga hutchinsonii (strain ATCC 33406 / DSM 1761 / CIP 103989 / NBRC 15051 / NCIMB 9469 / D465) protein is Phosphopantetheine adenylyltransferase.